We begin with the raw amino-acid sequence, 706 residues long: Gamma-adducin (706 aa).

The segment covering 1–11 (MSSDTSPAVVT) has biased composition (low complexity). Residues 1 to 23 (MSSDTSPAVVTTPPPPSMPHKER) form a disordered region. Residue Ser2 is modified to N-acetylserine. Residues Ser31, Ser42, Ser64, Ser402, Ser414, Ser423, Ser442, and Ser461 each carry the phosphoserine modification. 4 disordered regions span residues 471 to 495 (AEDS…VPLN), 534 to 556 (PPST…PFSH), 574 to 610 (QGLD…RLEE), and 651 to 706 (TSTT…KVEA). A Glycyl lysine isopeptide (Lys-Gly) (interchain with G-Cter in SUMO2) cross-link involves residue Lys484. Phosphoserine occurs at positions 583, 585, and 590. Low complexity-rich tracts occupy residues 590 to 605 (SVSQ…QSVP) and 651 to 662 (TSTTIENIEITI). Phosphoserine is present on residues Ser673, Ser677, Ser679, Ser681, and Ser683. Residues 682–706 (PSKKKKKFRTPSFLKKNKKKEKVEA) are compositionally biased toward basic residues. Residues 684-701 (KKKKKFRTPSFLKKNKKK) are interaction with calmodulin.

The protein belongs to the aldolase class II family. Adducin subfamily. As to quaternary structure, heterodimer of an alpha and a gamma subunit. In terms of processing, sumoylated. Proteolytically cleaved by asparagine endopeptidase (AEP) into 2 fragments. Overexpression of the 1-357 fragment induces neuronal apoptosis, and overexpression of either 1-357 or 358-706 fragment increases the degeneration of dendritic spines. Overexpression of the 1-357 fragment impairs neurite outgrowth by downregulating the expression of Rac2, and induces synaptic dysfunction and cognitive impairments in tau P301S transgenic mice, a mouse model for Alzheimer disease (AD). Cleavage fragment 1-357 is expressed in the brain and the expression increases with age (at protein level). The fragment is expressed in the cortex, hippocampal CA1 region and hippocampal dentate gyrus in tau P301S transgenic mice, a mouse model for Alzheimer disease (AD) (at protein level). The fragment is only weakly expressed in non-transgenic mouse brain sections (at protein level).

It localises to the cytoplasm. The protein resides in the cytoskeleton. The protein localises to the cell membrane. Functionally, membrane-cytoskeleton-associated protein that promotes the assembly of the spectrin-actin network. Plays a role in actin filament capping. Binds to calmodulin. Involved in myogenic reactivity of the renal afferent arteriole (Af-art), renal interlobular arteries and middle cerebral artery (MCA) to increased perfusion pressure. Involved in regulation of potassium channels in the vascular smooth muscle cells (VSMCs) of the Af-art and MCA ex vivo. Involved in regulation of glomerular capillary pressure, glomerular filtration rate (GFR) and glomerular nephrin expression in response to hypertension. Involved in renal blood flow (RBF) autoregulation. Plays a role in podocyte structure and function. Regulates globular monomer actin (G-actin) and filamentous polymer actin (F-actin) ratios in the primary podocytes affecting actin cytoskeleton organization. Regulates expression of synaptopodin, RhoA, Rac1 and CDC42 in the renal cortex and the primary podocytes. Regulates expression of nephrin in the glomeruli and in the primary podocytes, expression of nephrin and podocinin in the renal cortex, and expression of focal adhesion proteins integrin alpha-3 and integrin beta-1 in the glomeruli. Involved in cell migration and cell adhesion of podocytes, and in podocyte foot process effacement. Regulates expression of profibrotics markers MMP2, MMP9, TGF beta-1, tubular tight junction protein E-cadherin, and mesenchymal markers vimentin and alpha-SMA. Promotes the growth of neurites. This chain is Gamma-adducin (Add3), found in Mus musculus (Mouse).